Reading from the N-terminus, the 93-residue chain is Integration host factor subunit beta (93 aa).

The protein belongs to the bacterial histone-like protein family. In terms of assembly, heterodimer of an alpha and a beta chain.

In terms of biological role, this protein is one of the two subunits of integration host factor, a specific DNA-binding protein that functions in genetic recombination as well as in transcriptional and translational control. The sequence is that of Integration host factor subunit beta from Glaesserella parasuis serovar 5 (strain SH0165) (Haemophilus parasuis).